A 1058-amino-acid chain; its full sequence is Ubiquitin-like modifier-activating enzyme 1 (1058 aa).

The tract at residues 1–47 (MSSSPLSKKRRVSGPDPKPGSNCSPAQSVLSEVPSVPTNGMAKNGSE) is disordered. Residue Ser2 is modified to N-acetylserine. N-acetylalanine is present on Ser2. Position 4 is a phosphoserine (Ser4). The short motif at 5–11 (PLSKKRR) is the Nuclear localization signal element. Ser13, Ser21, Ser24, and Ser46 each carry phosphoserine. Residues 21 to 30 (SNCSPAQSVL) show a composition bias toward polar residues. Residue Tyr55 is modified to Phosphotyrosine. Repeat copies occupy residues 63 to 199 (GHEA…GQLF) and 459 to 611 (GSDL…QVVI). The 2 approximate repeats stretch occupies residues 63 to 611 (GHEAMKRLQT…GTKGNVQVVI (549 aa)). ATP contacts are provided by residues Ala478, Asp504, Arg515, Lys528, and 576–577 (DN). Lys528 carries the post-translational modification N6-succinyllysine. The Glycyl thioester intermediate role is filled by Cys632. Lys671 is modified (N6-acetyllysine). Thr800 is modified (phosphothreonine). Phosphoserine occurs at positions 810, 816, 820, and 835. Lys980 is subject to N6-acetyllysine.

Belongs to the ubiquitin-activating E1 family. In terms of assembly, monomer. Interacts with GAN (via BTB domain). Post-translationally, ISGylated. Detected in erythrocytes (at protein level). Ubiquitous.

The protein resides in the cytoplasm. It localises to the mitochondrion. It is found in the nucleus. The enzyme catalyses ATP + ubiquitin + [E1 ubiquitin-activating enzyme]-L-cysteine = AMP + diphosphate + S-ubiquitinyl-[E1 ubiquitin-activating enzyme]-L-cysteine.. It participates in protein modification; protein ubiquitination. Its function is as follows. Catalyzes the first step in ubiquitin conjugation to mark cellular proteins for degradation through the ubiquitin-proteasome system. Activates ubiquitin by first adenylating its C-terminal glycine residue with ATP, and thereafter linking this residue to the side chain of a cysteine residue in E1, yielding a ubiquitin-E1 thioester and free AMP. Essential for the formation of radiation-induced foci, timely DNA repair and for response to replication stress. Promotes the recruitment of TP53BP1 and BRCA1 at DNA damage sites. In Homo sapiens (Human), this protein is Ubiquitin-like modifier-activating enzyme 1 (UBA1).